An 81-amino-acid chain; its full sequence is MKKDIHPEYKKVVFLDTSTNFKFLSGSTKGSDETIEWEDGNTYPLIKVEISSDSHPFYTGKQKADKVGGRVDRFKKKYNLQ.

The protein belongs to the bacterial ribosomal protein bL31 family. Type B subfamily. In terms of assembly, part of the 50S ribosomal subunit.

The chain is Large ribosomal subunit protein bL31B from Oceanobacillus iheyensis (strain DSM 14371 / CIP 107618 / JCM 11309 / KCTC 3954 / HTE831).